A 202-amino-acid polypeptide reads, in one-letter code: Urease accessory protein UreG (202 aa).

GTP is bound at residue 13-20; sequence GPVGAGKT.

Belongs to the SIMIBI class G3E GTPase family. UreG subfamily. Homodimer. UreD, UreF and UreG form a complex that acts as a GTP-hydrolysis-dependent molecular chaperone, activating the urease apoprotein by helping to assemble the nickel containing metallocenter of UreC. The UreE protein probably delivers the nickel.

Its subcellular location is the cytoplasm. Its function is as follows. Facilitates the functional incorporation of the urease nickel metallocenter. This process requires GTP hydrolysis, probably effectuated by UreG. The polypeptide is Urease accessory protein UreG (Dinoroseobacter shibae (strain DSM 16493 / NCIMB 14021 / DFL 12)).